The sequence spans 380 residues: L-lactate dehydrogenase (380 aa).

Residues 1–380 enclose the FMN hydroxy acid dehydrogenase domain; the sequence is MIISASTDYR…SADSLVQGLR (380 aa). Tyrosine 24 contacts substrate. FMN-binding residues include serine 106 and glutamine 127. Tyrosine 129 is a binding site for substrate. Position 155 (threonine 155) interacts with FMN. Residue arginine 164 coordinates substrate. Lysine 251 is an FMN binding site. Histidine 275 acts as the Proton acceptor in catalysis. Residue arginine 278 participates in substrate binding. Residue 306 to 330 coordinates FMN; it reads DSGIRSGLDVVRMIALGADGVLLGR.

The protein belongs to the FMN-dependent alpha-hydroxy acid dehydrogenase family. FMN is required as a cofactor.

It localises to the cell inner membrane. It catalyses the reaction (S)-lactate + A = pyruvate + AH2. Catalyzes the conversion of L-lactate to pyruvate. Is coupled to the respiratory chain. This Serratia proteamaculans (strain 568) protein is L-lactate dehydrogenase.